Here is a 284-residue protein sequence, read N- to C-terminus: Bifunctional protein FolD (284 aa).

Residues G165 to S167, S190, and V231 contribute to the NADP(+) site.

Belongs to the tetrahydrofolate dehydrogenase/cyclohydrolase family. In terms of assembly, homodimer.

It catalyses the reaction (6R)-5,10-methylene-5,6,7,8-tetrahydrofolate + NADP(+) = (6R)-5,10-methenyltetrahydrofolate + NADPH. The catalysed reaction is (6R)-5,10-methenyltetrahydrofolate + H2O = (6R)-10-formyltetrahydrofolate + H(+). The protein operates within one-carbon metabolism; tetrahydrofolate interconversion. Functionally, catalyzes the oxidation of 5,10-methylenetetrahydrofolate to 5,10-methenyltetrahydrofolate and then the hydrolysis of 5,10-methenyltetrahydrofolate to 10-formyltetrahydrofolate. This chain is Bifunctional protein FolD, found in Bacillus licheniformis (strain ATCC 14580 / DSM 13 / JCM 2505 / CCUG 7422 / NBRC 12200 / NCIMB 9375 / NCTC 10341 / NRRL NRS-1264 / Gibson 46).